The sequence spans 260 residues: Ribonuclease PH (260 aa).

Phosphate is bound by residues arginine 87 and 125-127; that span reads GTR. The segment at 232-260 is disordered; that stretch reads LAAPPAAGPPAPERAGAGSGSGGKGTGSR. A compositionally biased stretch (gly residues) spans 248 to 260; it reads AGSGSGGKGTGSR.

It belongs to the RNase PH family. As to quaternary structure, homohexameric ring arranged as a trimer of dimers.

The catalysed reaction is tRNA(n+1) + phosphate = tRNA(n) + a ribonucleoside 5'-diphosphate. Functionally, phosphorolytic 3'-5' exoribonuclease that plays an important role in tRNA 3'-end maturation. Removes nucleotide residues following the 3'-CCA terminus of tRNAs; can also add nucleotides to the ends of RNA molecules by using nucleoside diphosphates as substrates, but this may not be physiologically important. Probably plays a role in initiation of 16S rRNA degradation (leading to ribosome degradation) during starvation. This chain is Ribonuclease PH, found in Parafrankia sp. (strain EAN1pec).